Reading from the N-terminus, the 221-residue chain is Lipoprotein-releasing system ATP-binding protein LolD (221 aa).

Residues 6-220 (LILKNISKHY…YKLKHRLLNI (215 aa)) enclose the ABC transporter domain. 42 to 49 (GSSGSGKS) contacts ATP.

Belongs to the ABC transporter superfamily. Lipoprotein translocase (TC 3.A.1.125) family. As to quaternary structure, the complex is composed of two ATP-binding proteins (LolD) and two transmembrane proteins (LolC and LolE).

The protein localises to the cell inner membrane. Functionally, part of the ABC transporter complex LolCDE involved in the translocation of mature outer membrane-directed lipoproteins, from the inner membrane to the periplasmic chaperone, LolA. Responsible for the formation of the LolA-lipoprotein complex in an ATP-dependent manner. The protein is Lipoprotein-releasing system ATP-binding protein LolD of Rickettsia conorii (strain ATCC VR-613 / Malish 7).